The primary structure comprises 356 residues: tRNA N6-adenosine threonylcarbamoyltransferase (356 aa).

Fe cation-binding residues include H110 and H114. Residues 133–137, D166, G179, and N276 contribute to the substrate site; that span reads LVSGG. D304 is a Fe cation binding site.

The protein belongs to the KAE1 / TsaD family. It depends on Fe(2+) as a cofactor.

It is found in the cytoplasm. It catalyses the reaction L-threonylcarbamoyladenylate + adenosine(37) in tRNA = N(6)-L-threonylcarbamoyladenosine(37) in tRNA + AMP + H(+). Its function is as follows. Required for the formation of a threonylcarbamoyl group on adenosine at position 37 (t(6)A37) in tRNAs that read codons beginning with adenine. Is involved in the transfer of the threonylcarbamoyl moiety of threonylcarbamoyl-AMP (TC-AMP) to the N6 group of A37, together with TsaE and TsaB. TsaD likely plays a direct catalytic role in this reaction. The protein is tRNA N6-adenosine threonylcarbamoyltransferase of Teredinibacter turnerae (strain ATCC 39867 / T7901).